The chain runs to 292 residues: Homoserine kinase (292 aa).

Pro-84 to Ala-94 is a binding site for ATP.

It belongs to the GHMP kinase family. Homoserine kinase subfamily.

Its subcellular location is the cytoplasm. The enzyme catalyses L-homoserine + ATP = O-phospho-L-homoserine + ADP + H(+). It participates in amino-acid biosynthesis; L-threonine biosynthesis; L-threonine from L-aspartate: step 4/5. Functionally, catalyzes the ATP-dependent phosphorylation of L-homoserine to L-homoserine phosphate. The chain is Homoserine kinase from Campylobacter jejuni subsp. doylei (strain ATCC BAA-1458 / RM4099 / 269.97).